We begin with the raw amino-acid sequence, 352 residues long: N-lysine methyltransferase KMT5A (352 aa).

Positions 21–51 (AVAATAPGPEMVERRGPGRPRTNGENVFTGQ) are disordered. The residue at position 59 (Ser-59) is a Phosphoserine. Positions 87–202 (PLAGIYRKRD…KSKAELQSEE (116 aa)) are disordered. The segment covering 109-121 (MKAEEQKIKDARR) has biased composition (basic and acidic residues). A Phosphothreonine modification is found at Thr-140. Positions 156 to 172 (GLKKPVRGKQAPRKKAQ) are enriched in basic residues. Residues 216–337 (EGMKIDLIDG…AGEELLYDYG (122 aa)) enclose the SET domain. S-adenosyl-L-methionine-binding positions include 226 to 228 (KGR), Tyr-271, and 298 to 299 (NH).

This sequence belongs to the class V-like SAM-binding methyltransferase superfamily. Histone-lysine methyltransferase family. PR/SET subfamily. In terms of assembly, interacts with L3MBTL1. Interacts with SIRT2 (phosphorylated form); the interaction is direct, stimulates KMT5A-mediated methyltransferase activity at histone H4 'Lys-20' (H4K20me1) and is increased in a H(2)O(2)-induced oxidative stress-dependent manner. Ubiquitinated and degraded by the DCX(DTL) complex.

It localises to the nucleus. The protein localises to the chromosome. It carries out the reaction L-lysyl(20)-[histone H4] + S-adenosyl-L-methionine = N(6)-methyl-L-lysyl(20)-[histone H4] + S-adenosyl-L-homocysteine + H(+). The catalysed reaction is L-lysyl-[protein] + S-adenosyl-L-methionine = N(6)-methyl-L-lysyl-[protein] + S-adenosyl-L-homocysteine + H(+). Protein-lysine N-methyltransferase that monomethylates both histones and non-histone proteins. Specifically monomethylates 'Lys-20' of histone H4 (H4K20me1). H4K20me1 is enriched during mitosis and represents a specific tag for epigenetic transcriptional repression. Mainly functions in euchromatin regions, thereby playing a central role in the silencing of euchromatic genes. Required for cell proliferation, probably by contributing to the maintenance of proper higher-order structure of DNA during mitosis. Involved in chromosome condensation and proper cytokinesis. Nucleosomes are preferred as substrate compared to free histones. Mediates monomethylation of p53/TP53 at 'Lys-382', leading to repress p53/TP53-target genes. Plays a negative role in TGF-beta response regulation and a positive role in cell migration. The sequence is that of N-lysine methyltransferase KMT5A from Bos taurus (Bovine).